Consider the following 642-residue polypeptide: Chaperone protein DnaK (642 aa).

The residue at position 200 (threonine 200) is a Phosphothreonine; by autocatalysis. Positions 603–623 (AAAAEQGGNADAASGNAQASK) are enriched in low complexity. The tract at residues 603-627 (AAAAEQGGNADAASGNAQASKAADD) is disordered.

It belongs to the heat shock protein 70 family.

Acts as a chaperone. This is Chaperone protein DnaK from Xanthomonas campestris pv. campestris (strain B100).